The sequence spans 873 residues: Leucine--tRNA ligase (873 aa).

The 'HIGH' region signature appears at 48–58 (PYPSGKLHMGH). Positions 636 to 640 (KMSKS) match the 'KMSKS' region motif. Lysine 639 contributes to the ATP binding site.

Belongs to the class-I aminoacyl-tRNA synthetase family.

It is found in the cytoplasm. The enzyme catalyses tRNA(Leu) + L-leucine + ATP = L-leucyl-tRNA(Leu) + AMP + diphosphate. This chain is Leucine--tRNA ligase, found in Cupriavidus metallidurans (strain ATCC 43123 / DSM 2839 / NBRC 102507 / CH34) (Ralstonia metallidurans).